Here is a 628-residue protein sequence, read N- to C-terminus: Hemocyanin II (628 aa).

A Blocked amino end (Thr); partial modification is found at T1. The Cu cation site is built by H173, H177, H204, H324, H328, and H364. N449 carries N-linked (GlcNAc...) asparagine glycosylation. 2 cysteine pairs are disulfide-bonded: C534–C576 and C536–C583.

The protein belongs to the tyrosinase family. Hemocyanin subfamily. In terms of assembly, hexamer or a multiple thereof. Hemolymph.

It is found in the secreted. The protein resides in the extracellular space. Hemocyanins are copper-containing oxygen carriers occurring freely dissolved in the hemolymph of many mollusks and arthropods. The protein is Hemocyanin II of Limulus polyphemus (Atlantic horseshoe crab).